The chain runs to 1438 residues: Lysophospholipase NTE1 (1438 aa).

Residues 1 to 25 (MDSDTSSADFHSTETLVSTPKYSYG) lie on the Cytoplasmic side of the membrane. Residues 26 to 46 (VLINVILLVSWTCFRVVNWFL) traverse the membrane as a helical segment. The Lumenal segment spans residues 47–64 (VTLPSILLGMLSKTFQIT). A helical membrane pass occupies residues 65–85 (LSLSSILMFVVAVTAICFLVV). The Cytoplasmic portion of the chain corresponds to 86–1438 (RYKYLTRYSR…HVSLSRRNSI (1353 aa)). A compositionally biased stretch (polar residues) spans 432 to 450 (YETQTIPNESEDSPTIQRS). Residues 432–464 (YETQTIPNESEDSPTIQRSSLRRRASHSTSLRK) are disordered. A nucleoside 3',5'-cyclic phosphate-binding positions include 590 to 720 (GDDS…LTID) and 707 to 856 (RLKR…VANR). One can recognise a PNPLA domain in the interval 1131–1295 (LVLGGGGSRG…LDNLPVSEMK (165 aa)). The GXGXXG signature appears at 1135–1140 (GGGSRG). A GXSXG motif is present at residues 1162 to 1166 (GTSIG). The active-site Nucleophile is serine 1164. The Proton acceptor role is filled by aspartate 1282. The short motif at 1282–1284 (DGG) is the DGA/G element.

It belongs to the NTE family.

The protein localises to the endoplasmic reticulum membrane. It carries out the reaction a 1-acyl-sn-glycero-3-phosphocholine + H2O = sn-glycerol 3-phosphocholine + a fatty acid + H(+). With respect to regulation, inhibited by organophosphorus esters. Its function is as follows. Intracellular phospholipase B that catalyzes the double deacylation of phosphatidylcholine (PC) to glycerophosphocholine (GroPCho). Plays an important role in membrane lipid homeostasis. Responsible for the rapid PC turnover in response to inositol, elevated temperatures, or when choline is present in the growth medium. In Meyerozyma guilliermondii (strain ATCC 6260 / CBS 566 / DSM 6381 / JCM 1539 / NBRC 10279 / NRRL Y-324) (Yeast), this protein is Lysophospholipase NTE1 (NTE1).